The following is a 270-amino-acid chain: Hydroxyethylthiazole kinase (270 aa).

Residue methionine 47 participates in substrate binding. Residues arginine 123 and threonine 169 each coordinate ATP. Glycine 196 serves as a coordination point for substrate.

The protein belongs to the Thz kinase family. The cofactor is Mg(2+).

It catalyses the reaction 5-(2-hydroxyethyl)-4-methylthiazole + ATP = 4-methyl-5-(2-phosphooxyethyl)-thiazole + ADP + H(+). It participates in cofactor biosynthesis; thiamine diphosphate biosynthesis; 4-methyl-5-(2-phosphoethyl)-thiazole from 5-(2-hydroxyethyl)-4-methylthiazole: step 1/1. Functionally, catalyzes the phosphorylation of the hydroxyl group of 4-methyl-5-beta-hydroxyethylthiazole (THZ). In Roseiflexus castenholzii (strain DSM 13941 / HLO8), this protein is Hydroxyethylthiazole kinase.